The following is a 160-amino-acid chain: Probable transcriptional regulator YgiV (160 aa).

Its function is as follows. Represses expression of mcbR. The sequence is that of Probable transcriptional regulator YgiV (ygiV) from Escherichia coli O157:H7.